A 530-amino-acid chain; its full sequence is C2H2-type transcription factor MSN2 (530 aa).

2 consecutive C2H2-type zinc fingers follow at residues 409–437 and 438–465; these read FVCD…QEKP and FECN…SGGA.

It is found in the nucleus. The protein resides in the cytoplasm. Its function is as follows. Transcription factor that acts as a key downstream transcription factor in the HOG1-MAPK pathway. Plays crucial roles in the regulation of dimorphism transition, aggravated pigmentation, conidiation, microsclerotia formation and subsequent virulence towards Spodoptera litura larvae. More specifically regulates the expression of genes involved in antioxidation, pigment biosynthesis and ion transport and storage. This chain is C2H2-type transcription factor MSN2, found in Metarhizium rileyi (strain RCEF 4871) (Nomuraea rileyi).